The sequence spans 484 residues: MVMPTVVSDRMGTIDFIDYTNNHVFSKCQTDSLNTVNNGSLKHDDYLHGLANGKLVAKQMIGDALRQRVESIDSEFCEPGDEDTFFVADLGEVYRQHLRWKLNLPRVKPFYAVKCHPDERLLQLLAALGTGFDCASKAEIEQVLRMGVDPSRIIYAQPCKTNSYLRYVAQQGVRQMTFDNADELRKIARLYPDAELFLRILTDDSSSLCRFSMKFGASLDSTDGLLGLARQLGLNVVGVSFHVGSGASDPTAFLKAVQDAHVVFQQAAAYGYSLKTLDVGGGFCSDDSFEQMANVLRAALDEYFPAHTGVNLIAEPGRYYASSAFTLACNIIARRTIQDGSAVSVSDSSSMSDDGSVNNGDARYMVYVNDGLYGNFSSIMFDHQHPVAKILRAGGRTMYNSVAAHESSAEDAIEYSIWGPTCDGIDRITESIRFREILDVGDWLYFEDMGAYTKCSATTFNGFSNEHDVIYVCSEPGAMALLGL.

The residue at position 114 (Lys-114) is an N6-(pyridoxal phosphate)lysine. Pyridoxal 5'-phosphate-binding positions include Ser-245, Gly-282, and 315–318 (EPGR). Substrate is bound at residue 381–382 (FD). The Proton donor; shared with dimeric partner role is filled by Cys-422. Asp-423 is a binding site for substrate. Residue Tyr-452 participates in pyridoxal 5'-phosphate binding.

This sequence belongs to the Orn/Lys/Arg decarboxylase class-II family. Homodimer. Only the dimer is catalytically active, as the active sites are constructed of residues from both monomers. The cofactor is pyridoxal 5'-phosphate.

The protein localises to the cytoplasm. It carries out the reaction L-ornithine + H(+) = putrescine + CO2. It participates in amine and polyamine biosynthesis; putrescine biosynthesis via L-ornithine pathway; putrescine from L-ornithine: step 1/1. Inhibited by antizyme (AZ) OAZ1 in response to polyamine levels. AZ inhibits the assembly of the functional homodimer by binding to ODC monomers and targeting them for ubiquitin-independent proteolytic destruction by the 26S proteasome. Its function is as follows. Catalyzes the first and rate-limiting step of polyamine biosynthesis that converts ornithine into putrescine, which is the precursor for the polyamines, spermidine and spermine. Polyamines are essential for cell proliferation and are implicated in cellular processes, ranging from DNA replication to apoptosis. This is Ornithine decarboxylase (spe-1) from Neurospora crassa (strain ATCC 24698 / 74-OR23-1A / CBS 708.71 / DSM 1257 / FGSC 987).